We begin with the raw amino-acid sequence, 319 residues long: Ribonucleoside-diphosphate reductase small chain (319 aa).

Residues D70, E101, and H104 each contribute to the Fe cation site. Residue Y108 is part of the active site. Residues E163, E197, and H200 each contribute to the Fe cation site. The segment at 313–319 (FSLDVDF) is interaction with R1.

This sequence belongs to the ribonucleoside diphosphate reductase small chain family. As to quaternary structure, interacts with RNR1/OPG080 subunit. Can interact with host RNR1 supunit. The cofactor is Fe cation.

The catalysed reaction is a 2'-deoxyribonucleoside 5'-diphosphate + [thioredoxin]-disulfide + H2O = a ribonucleoside 5'-diphosphate + [thioredoxin]-dithiol. Its function is as follows. Ribonucleoside-diphosphate reductase holoenzyme provides the precursors necessary for viral DNA synthesis. Allows virus growth in non-dividing cells. Catalyzes the biosynthesis of deoxyribonucleotides from the corresponding ribonucleotides. The polypeptide is Ribonucleoside-diphosphate reductase small chain (OPG048) (Vaccinia virus (strain Copenhagen) (VACV)).